The following is a 446-amino-acid chain: Ribulose bisphosphate carboxylase large chain (446 aa).

Residues asparagine 89 and threonine 139 each coordinate substrate. Catalysis depends on lysine 141, which acts as the Proton acceptor. Residue lysine 143 coordinates substrate. 3 residues coordinate Mg(2+): lysine 167, aspartate 169, and glutamate 170. Residue lysine 167 is modified to N6-carboxylysine. Catalysis depends on histidine 260, which acts as the Proton acceptor. Residues arginine 261, histidine 293, and serine 345 each contribute to the substrate site.

Belongs to the RuBisCO large chain family. Type I subfamily. In terms of assembly, heterohexadecamer of 8 large chains and 8 small chains; disulfide-linked. The disulfide link is formed within the large subunit homodimers. It depends on Mg(2+) as a cofactor. Post-translationally, the disulfide bond which can form in the large chain dimeric partners within the hexadecamer appears to be associated with oxidative stress and protein turnover.

The protein localises to the plastid. The protein resides in the chloroplast. The catalysed reaction is 2 (2R)-3-phosphoglycerate + 2 H(+) = D-ribulose 1,5-bisphosphate + CO2 + H2O. The enzyme catalyses D-ribulose 1,5-bisphosphate + O2 = 2-phosphoglycolate + (2R)-3-phosphoglycerate + 2 H(+). Functionally, ruBisCO catalyzes two reactions: the carboxylation of D-ribulose 1,5-bisphosphate, the primary event in carbon dioxide fixation, as well as the oxidative fragmentation of the pentose substrate in the photorespiration process. Both reactions occur simultaneously and in competition at the same active site. In Exacum affine (Persian violet), this protein is Ribulose bisphosphate carboxylase large chain.